The following is a 255-amino-acid chain: 1-(5-phosphoribosyl)-5-[(5-phosphoribosylamino)methylideneamino] imidazole-4-carboxamide isomerase (255 aa).

D8 serves as the catalytic Proton acceptor. The active-site Proton donor is D129.

Belongs to the HisA/HisF family.

It localises to the cytoplasm. The catalysed reaction is 1-(5-phospho-beta-D-ribosyl)-5-[(5-phospho-beta-D-ribosylamino)methylideneamino]imidazole-4-carboxamide = 5-[(5-phospho-1-deoxy-D-ribulos-1-ylimino)methylamino]-1-(5-phospho-beta-D-ribosyl)imidazole-4-carboxamide. Its pathway is amino-acid biosynthesis; L-histidine biosynthesis; L-histidine from 5-phospho-alpha-D-ribose 1-diphosphate: step 4/9. This is 1-(5-phosphoribosyl)-5-[(5-phosphoribosylamino)methylideneamino] imidazole-4-carboxamide isomerase from Synechococcus sp. (strain CC9902).